We begin with the raw amino-acid sequence, 204 residues long: MRGTLYIVSAASGTGKSSIVNATLERDQQIALSISFTSRQPRPNERHAQHYYFVSADEFQRMIEAGDFFEYALVHDDWKGTAHQSVEPQLAAGHDVLLEIDWQGARQVRNKIPDAISIFILPPSRAALEERLRKRGQDSEEVIHRRLAAVHEEMAHYDEFDYTIINEHFETAVSEMSAIFTASRLRRQTQKVRHANLIRTLLTP.

The Guanylate kinase-like domain occupies Gly-3–Thr-181. Ala-10–Ser-17 is a binding site for ATP.

Belongs to the guanylate kinase family.

It localises to the cytoplasm. The enzyme catalyses GMP + ATP = GDP + ADP. Its function is as follows. Essential for recycling GMP and indirectly, cGMP. The sequence is that of Guanylate kinase (gmk) from Xylella fastidiosa (strain 9a5c).